Reading from the N-terminus, the 210-residue chain is 3-hexulose-6-phosphate synthase (210 aa).

Belongs to the HPS/KGPDC family. HPS subfamily.

It carries out the reaction D-ribulose 5-phosphate + formaldehyde = D-arabino-hex-3-ulose 6-phosphate. Its pathway is one-carbon metabolism; formaldehyde assimilation via RuMP pathway; D-fructose 6-phosphate from D-ribulose 5-phosphate and formaldehyde: step 1/2. In terms of biological role, catalyzes the condensation of ribulose 5-phosphate with formaldehyde to form 3-hexulose 6-phosphate. The sequence is that of 3-hexulose-6-phosphate synthase from Staphylococcus aureus (strain bovine RF122 / ET3-1).